A 266-amino-acid chain; its full sequence is Undecaprenyl-diphosphatase (266 aa).

The next 8 membrane-spanning stretches (helical) occupy residues 1-21 (MDTF…FLPI), 39-59 (QGLS…VMYF), 87-107 (WWII…KDFI), 111-131 (FRSI…LWWA), 144-164 (VGWK…IPGT), 183-203 (AAAR…AILV), 218-238 (ALGL…HYFL), and 246-266 (MTPF…IIFL).

The protein belongs to the UppP family.

It is found in the cell inner membrane. The enzyme catalyses di-trans,octa-cis-undecaprenyl diphosphate + H2O = di-trans,octa-cis-undecaprenyl phosphate + phosphate + H(+). Functionally, catalyzes the dephosphorylation of undecaprenyl diphosphate (UPP). Confers resistance to bacitracin. The chain is Undecaprenyl-diphosphatase from Shewanella pealeana (strain ATCC 700345 / ANG-SQ1).